A 248-amino-acid chain; its full sequence is tRNA pseudouridine synthase A (248 aa).

Aspartate 53 serves as the catalytic Nucleophile. Position 111 (tyrosine 111) interacts with substrate.

This sequence belongs to the tRNA pseudouridine synthase TruA family. In terms of assembly, homodimer.

It catalyses the reaction uridine(38/39/40) in tRNA = pseudouridine(38/39/40) in tRNA. In terms of biological role, formation of pseudouridine at positions 38, 39 and 40 in the anticodon stem and loop of transfer RNAs. In Listeria monocytogenes serotype 4a (strain HCC23), this protein is tRNA pseudouridine synthase A.